A 424-amino-acid chain; its full sequence is Isovaleryl-CoA dehydrogenase, mitochondrial (424 aa).

The transit peptide at 1–30 (MATAVRLLGRRVSSWRLRPLPSPLAVPQRA) directs the protein to the mitochondrion. N6-acetyllysine; alternate is present on residues lysine 56, lysine 65, and lysine 76. Lysine 56, lysine 65, and lysine 76 each carry N6-succinyllysine; alternate. Residues 163 to 172 (LAMSEPNAGS) and 196 to 198 (WIT) each bind FAD. Serine 172 is a substrate binding site. A substrate-binding site is contributed by 220–221 (SR). Lysine 239 carries the N6-acetyllysine modification. Lysine 260 carries the N6-acetyllysine; alternate modification. Lysine 260 carries the post-translational modification N6-succinyllysine; alternate. Substrate contacts are provided by residues tyrosine 275 and 282–285 (DLER). Glutamate 284 (proton acceptor) is an active-site residue. Arginine 310 contributes to the FAD binding site. Lysine 316 is modified (N6-succinyllysine). FAD contacts are provided by residues glutamine 321 and 378–382 (QCLGG). Position 405-406 (405-406 (GG)) interacts with substrate. Position 407 to 409 (407 to 409 (TSE)) interacts with FAD.

Belongs to the acyl-CoA dehydrogenase family. Homotetramer. It depends on FAD as a cofactor.

The protein localises to the mitochondrion matrix. It catalyses the reaction 3-methylbutanoyl-CoA + oxidized [electron-transfer flavoprotein] + H(+) = 3-methylbut-2-enoyl-CoA + reduced [electron-transfer flavoprotein]. It carries out the reaction pentanoyl-CoA + oxidized [electron-transfer flavoprotein] + H(+) = (2E)-pentenoyl-CoA + reduced [electron-transfer flavoprotein]. The enzyme catalyses hexanoyl-CoA + oxidized [electron-transfer flavoprotein] + H(+) = (2E)-hexenoyl-CoA + reduced [electron-transfer flavoprotein]. The catalysed reaction is butanoyl-CoA + oxidized [electron-transfer flavoprotein] + H(+) = (2E)-butenoyl-CoA + reduced [electron-transfer flavoprotein]. Its pathway is amino-acid degradation; L-leucine degradation; (S)-3-hydroxy-3-methylglutaryl-CoA from 3-isovaleryl-CoA: step 1/3. Catalyzes the conversion of isovaleryl-CoA/3-methylbutanoyl-CoA to 3-methylbut-2-enoyl-CoA as an intermediate step in the leucine (Leu) catabolic pathway. To a lesser extent, is also able to catalyze the oxidation of other saturated short-chain acyl-CoA thioesters as pentanoyl-CoA, hexenoyl-CoA and butenoyl-CoA. This is Isovaleryl-CoA dehydrogenase, mitochondrial (Ivd) from Rattus norvegicus (Rat).